The chain runs to 435 residues: Putative GMP synthase [glutamine-hydrolyzing] 2 (435 aa).

The Glutamine amidotransferase type-1; truncated domain maps to 1 to 120 (MKQDMIVILD…VFDTCQAEAN (120 aa)). Residues 121 to 310 (WNMANFVNDQ…LGLPYEMVYR (190 aa)) form the GMPS ATP-PPase domain. ATP is bound at residue 148–154 (SGGVDSS).

In terms of assembly, homodimer.

The enzyme catalyses XMP + L-glutamine + ATP + H2O = GMP + L-glutamate + AMP + diphosphate + 2 H(+). It participates in purine metabolism; GMP biosynthesis; GMP from XMP (L-Gln route): step 1/1. Its function is as follows. Catalyzes the synthesis of GMP from XMP. In Bacteroides thetaiotaomicron (strain ATCC 29148 / DSM 2079 / JCM 5827 / CCUG 10774 / NCTC 10582 / VPI-5482 / E50), this protein is Putative GMP synthase [glutamine-hydrolyzing] 2 (guaA2).